We begin with the raw amino-acid sequence, 388 residues long: Probable Na(+)/H(+) antiporter 3 (388 aa).

12 helical membrane passes run 2–22 (ESYYYVFFIILSIIFIVPNLL), 27–47 (IPAITSIMIAGIIIGPYGLNI), 53–73 (TLKILADFGAIMLMFLAGLEV), 81–101 (EFKNSLILSLFSLLIPGVGGY), 102–122 (LIGQYLGLGFIGSLLYAVIFA), 146–166 (IILSATIIVDLFTLLLLSVVI), 175–195 (VGTFLLETVLYIGVLLLAIPS), 215–235 (VLFIIFIAIIVGEVIGIHPIV), 263–283 (AIGYGFFIPIFFLVLGMETNI), 294–314 (LLLITLISAVALKFISGFIAL), 325–345 (TIGGLLTVPKISASLVAASIG), and 354–374 (EIFVTIVALSVITATITPIVV).

It belongs to the monovalent cation:proton antiporter 1 (CPA1) transporter (TC 2.A.36) family.

The protein localises to the cell membrane. In terms of biological role, this is probably a Na(+)/H(+) antiporter. The chain is Probable Na(+)/H(+) antiporter 3 from Methanocaldococcus jannaschii (strain ATCC 43067 / DSM 2661 / JAL-1 / JCM 10045 / NBRC 100440) (Methanococcus jannaschii).